We begin with the raw amino-acid sequence, 69 residues long: Conotoxin Cal12.1p5 (69 aa).

The propeptide occupies 1–23; it reads DLITNSYTRGKPRHVTSWRNLKT.

Post-translationally, contains 4 disulfide bonds. In terms of tissue distribution, expressed by the venom duct.

Its subcellular location is the secreted. This is Conotoxin Cal12.1p5 from Californiconus californicus (California cone).